The primary structure comprises 307 residues: MDVAVESRVEPVGRIGVSRKVKAYISLTKPRVVELLLVTTVPTMILAARGIPNLWLVLATVVGGYMSAGSAGAFNCYIDRDIDRVMRRTKNRPLVTGELSDREALVFAWALGVASVLVLGFFTNWLAAGLSVAAILIYVVFYTLILKRRTTQNIVWGGVAGCMPVLIGWAVVTNSVGWAPVILFGVIFLWTPPHYWPLSMKYREDYKDAGVPMLAVVRGRAVVGLQVVLYAWAMVACSLLLIPVARMGVLYTAVALVAGGWFLYESHRLYNLAICHATVSPMRVFHGSIAYLTLIFLAVAIDPLLPF.

8 helical membrane-spanning segments follow: residues 32 to 52 (VVEL…RGIP), 54 to 74 (LWLV…AGAF), 105 to 125 (LVFA…FTNW), 126 to 146 (LAAG…TLIL), 169 to 189 (WAVV…VIFL), 222 to 242 (VVGL…LLLI), 244 to 264 (VARM…WFLY), and 287 to 307 (GSIA…LLPF).

Belongs to the UbiA prenyltransferase family. Protoheme IX farnesyltransferase subfamily.

Its subcellular location is the cell membrane. It catalyses the reaction heme b + (2E,6E)-farnesyl diphosphate + H2O = Fe(II)-heme o + diphosphate. It functions in the pathway porphyrin-containing compound metabolism; heme O biosynthesis; heme O from protoheme: step 1/1. Converts heme B (protoheme IX) to heme O by substitution of the vinyl group on carbon 2 of heme B porphyrin ring with a hydroxyethyl farnesyl side group. This Leifsonia xyli subsp. xyli (strain CTCB07) protein is Protoheme IX farnesyltransferase.